Reading from the N-terminus, the 347-residue chain is Probable 3-hydroxyisobutyrate dehydrogenase, mitochondrial (347 aa).

The N-terminal 34 residues, 1–34, are a transit peptide targeting the mitochondrion; the sequence is MAIRRAQTLLCLSKFKTNFVSGSLHRFSSSSQNS. Residues 38–67, 101–102, and T134 each bind NAD(+); these read QNVG…TVHD and LP. K219 is a catalytic residue. K294 lines the NAD(+) pocket.

It belongs to the HIBADH-related family. 3-hydroxyisobutyrate dehydrogenase subfamily.

The protein localises to the mitochondrion. It catalyses the reaction 3-hydroxy-2-methylpropanoate + NAD(+) = 2-methyl-3-oxopropanoate + NADH + H(+). It participates in amino-acid degradation; L-valine degradation. This Arabidopsis thaliana (Mouse-ear cress) protein is Probable 3-hydroxyisobutyrate dehydrogenase, mitochondrial.